The primary structure comprises 186 residues: Adenylate kinase (186 aa).

10 to 15 (GVGKGT) provides a ligand contact to ATP. The segment at 30–59 (STGDIFRYNIKNKTELGLEAMSYTDKGELV) is NMP. AMP contacts are provided by residues threonine 31, arginine 36, 57 to 59 (ELV), 85 to 88 (GYPR), and glutamine 92. The segment at 126–136 (KRAAEQGRADD) is LID. An ATP-binding site is contributed by arginine 127. Positions 133 and 144 each coordinate AMP. Residue glycine 172 participates in ATP binding.

Belongs to the adenylate kinase family. In terms of assembly, monomer.

It is found in the cytoplasm. It carries out the reaction AMP + ATP = 2 ADP. It functions in the pathway purine metabolism; AMP biosynthesis via salvage pathway; AMP from ADP: step 1/1. In terms of biological role, catalyzes the reversible transfer of the terminal phosphate group between ATP and AMP. Plays an important role in cellular energy homeostasis and in adenine nucleotide metabolism. This Bifidobacterium longum (strain NCC 2705) protein is Adenylate kinase.